The following is a 683-amino-acid chain: Actin-binding LIM protein 3 (683 aa).

M1 carries the N-acetylmethionine modification. 4 LIM zinc-binding domains span residues 21-80 (IQCY…LYGT), 80-140 (TRCD…MASS), 149-208 (SHCA…QFGI), and 208-268 (IKCE…ARAE). Residues S277, S280, S282, S286, S290, S337, S372, and S373 each carry the phosphoserine modification. The interval 372–472 (SSPGYIDSPT…EDISQTSKYS (101 aa)) is disordered. A Phosphotyrosine modification is found at Y376. Phosphoserine occurs at positions 379 and 388. 3 stretches are compositionally biased toward polar residues: residues 380 to 393 (PTYSRQGMSPTFSR), 406 to 426 (GRSSPYHSQLDVRSSTPTSYQ), and 454 to 471 (STATKSKTSEDISQTSKY). A phosphoserine mark is found at S493, S503, and S504. T543 carries the phosphothreonine modification. Phosphoserine occurs at positions 567, 576, and 607. Residues 615–683 (MREYKIYPYE…NELKKQARLF (69 aa)) enclose the HP domain. Residue R631 is modified to Omega-N-methylarginine.

In terms of assembly, directly interacts with F-actin and ABRA. As to expression, expressed predominantly in heart and brain.

It is found in the cytoplasm. May act as scaffold protein. May stimulate ABRA activity and ABRA-dependent SRF transcriptional activity. In Homo sapiens (Human), this protein is Actin-binding LIM protein 3 (ABLIM3).